The primary structure comprises 203 residues: Sperm-specific protein PHI-2B/PHI-3 (203 aa).

A compositionally biased stretch (basic residues) spans 1-35 (MPSPSRKSRSRSRSRSKSPKRSPAKKARKTPKKPR). Disordered regions lie at residues 1-46 (MPSP…PSTL) and 104-203 (KTSA…KSKK). The 80-residue stretch at 41–120 (KKPSTLSMIV…GATGSFRVGK (80 aa)) folds into the H15 domain. Basic residues-rich tracts occupy residues 126–140 (KKAK…KSSK) and 147–203 (KAKK…KSKK).

PL-II* and PL-IV are produced by post-translational cleavage of a common precursor. Sperm.

It is found in the nucleus. Its subcellular location is the chromosome. Functionally, linker histones are implicated in chromatin remodeling and/or transcriptional regulation during spermiogenesis, the process of spermatid maturation into spermatozoa. Protamines substitute for histones in the chromatin of sperm during the haploid phase of spermatogenesis. They compact sperm DNA into a highly condensed, stable and inactive complex. In Mytilus trossulus (Blue mussel), this protein is Sperm-specific protein PHI-2B/PHI-3.